We begin with the raw amino-acid sequence, 342 residues long: (+)-pulegone reductase (342 aa).

Residues 163–166 (GSVG), Lys189, Tyr205, Asn229, 251–257 (CGMVSQY), 281–283 (FVV), and Asn331 each bind NADP(+).

This sequence belongs to the NADP-dependent oxidoreductase L4BD family.

The protein localises to the cytoplasm. It carries out the reaction (2R,5R)-isomenthone + NADP(+) = (R)-pulegone + NADPH + H(+). The enzyme catalyses (1R,4S)-menthone + NADP(+) = (R)-pulegone + NADPH + H(+). It participates in secondary metabolite biosynthesis; terpenoid biosynthesis. With respect to regulation, not inhibited by (+)-menthofuran. In terms of biological role, monoterpene synthase that catalyzes the specific reduction of the 4,8-double bond of (+)-pulegone to produce both (-)-menthone and (+)-isomenthone in a 70:30 ratio. Unable to utilize either (-)-isopiperitenone or (+)-cis-isopulegone, or to catalyze the reverse reaction with (-)-menthone or (+)-isomenthone. Has an absolute requirement for NADPH. This is (+)-pulegone reductase from Mentha piperita (Peppermint).